We begin with the raw amino-acid sequence, 205 residues long: Adenylate kinase (205 aa).

Residue 10–15 (GAGKGT) coordinates ATP. An NMP region spans residues 30–59 (STGDMLRAAVAQGSEVGKVAEGIMARGELV). Residues T31, R36, 57-59 (ELV), 85-88 (GFPR), and Q92 each bind AMP. The segment at 126–139 (TRAAETAGGPRADD) is LID. Position 127 (R127) interacts with ATP. AMP is bound by residues R136 and R147. Residue K175 participates in ATP binding.

This sequence belongs to the adenylate kinase family. Monomer.

Its subcellular location is the cytoplasm. It carries out the reaction AMP + ATP = 2 ADP. The protein operates within purine metabolism; AMP biosynthesis via salvage pathway; AMP from ADP: step 1/1. Functionally, catalyzes the reversible transfer of the terminal phosphate group between ATP and AMP. Plays an important role in cellular energy homeostasis and in adenine nucleotide metabolism. This Parvibaculum lavamentivorans (strain DS-1 / DSM 13023 / NCIMB 13966) protein is Adenylate kinase.